Here is a 938-residue protein sequence, read N- to C-terminus: Isoleucine--tRNA ligase (938 aa).

Residues 58 to 68 carry the 'HIGH' region motif; it reads PYANGNIHMGH. An L-isoleucyl-5'-AMP-binding site is contributed by E566. Positions 607–611 match the 'KMSKS' region motif; it reads KMSKS. Residue K610 participates in ATP binding. Positions 906, 909, 926, and 929 each coordinate Zn(2+).

The protein belongs to the class-I aminoacyl-tRNA synthetase family. IleS type 1 subfamily. Monomer. Zn(2+) is required as a cofactor.

The protein localises to the cytoplasm. The enzyme catalyses tRNA(Ile) + L-isoleucine + ATP = L-isoleucyl-tRNA(Ile) + AMP + diphosphate. Functionally, catalyzes the attachment of isoleucine to tRNA(Ile). As IleRS can inadvertently accommodate and process structurally similar amino acids such as valine, to avoid such errors it has two additional distinct tRNA(Ile)-dependent editing activities. One activity is designated as 'pretransfer' editing and involves the hydrolysis of activated Val-AMP. The other activity is designated 'posttransfer' editing and involves deacylation of mischarged Val-tRNA(Ile). This Nitratidesulfovibrio vulgaris (strain DP4) (Desulfovibrio vulgaris) protein is Isoleucine--tRNA ligase.